The sequence spans 396 residues: NADH-quinone oxidoreductase subunit D (396 aa).

This sequence belongs to the complex I 49 kDa subunit family. As to quaternary structure, NDH-1 is composed of 14 different subunits. Subunits NuoB, C, D, E, F, and G constitute the peripheral sector of the complex.

Its subcellular location is the cell inner membrane. The enzyme catalyses a quinone + NADH + 5 H(+)(in) = a quinol + NAD(+) + 4 H(+)(out). NDH-1 shuttles electrons from NADH, via FMN and iron-sulfur (Fe-S) centers, to quinones in the respiratory chain. The immediate electron acceptor for the enzyme in this species is believed to be ubiquinone. Couples the redox reaction to proton translocation (for every two electrons transferred, four hydrogen ions are translocated across the cytoplasmic membrane), and thus conserves the redox energy in a proton gradient. This Brucella suis biovar 1 (strain 1330) protein is NADH-quinone oxidoreductase subunit D.